Reading from the N-terminus, the 273-residue chain is Type IV secretion system protein PtlF homolog (273 aa).

Residues 1–20 (MMAARMMAAGLAATALSAHA) form the signal peptide.

It belongs to the TrbG/VirB9 family.

It localises to the cell outer membrane. This is Type IV secretion system protein PtlF homolog (ptlF) from Bordetella bronchiseptica (strain ATCC BAA-588 / NCTC 13252 / RB50) (Alcaligenes bronchisepticus).